We begin with the raw amino-acid sequence, 216 residues long: uncharacterized protein (216 aa).

Residues Leu8–Leu63 form the HTH cro/C1-type domain. A DNA-binding region (H-T-H motif) is located at residues Ala19–Thr38.

This is an uncharacterized protein from Coxiella burnetii (strain RSA 493 / Nine Mile phase I).